Consider the following 142-residue polypeptide: MKTFVAKPAEVKRDWYIVDAEGKTLGRMAAEIAARLRGKHKPEYTPHVDCGDYIVVINAEKIAVTGNKRTDKMYHHVTGYVGNLKSTNFETLVGSKPTRPVEFAIKGMLPRGPLGRAMLKKLKVYAGAEHPHAAQQPKELDL.

This sequence belongs to the universal ribosomal protein uL13 family. In terms of assembly, part of the 50S ribosomal subunit.

Its function is as follows. This protein is one of the early assembly proteins of the 50S ribosomal subunit, although it is not seen to bind rRNA by itself. It is important during the early stages of 50S assembly. The sequence is that of Large ribosomal subunit protein uL13 from Hydrogenovibrio crunogenus (strain DSM 25203 / XCL-2) (Thiomicrospira crunogena).